Here is a 78-residue protein sequence, read N- to C-terminus: Calcium/calmodulin-dependent protein kinase II inhibitor 1 (78 aa).

Residues 41-68 (SKRPPKLGQIGRSKRVVIEDDRIDDVLK) are CAMK2 inhibitory domain.

It belongs to the CAMK2N family. Interacts with CAMK2B; the presence of Ca(2+)/calmodulin increases the interaction but is not essential. Interacts with CAMK2A; this interaction requires CAMK2A activation by Ca(2+). Expressed in the brain (at protein level). Expressed in cardiomyocytes but not cardiac fibroblasts (at protein level).

It localises to the synapse. Its subcellular location is the cell projection. The protein localises to the dendrite. It is found in the postsynaptic density. Its function is as follows. Potent and specific inhibitor of CaM-kinase II (CAMK2). Plays a role in the maintenance of long-term retrieval-induced memory in response to contextual fear. Modulates blood pressure and vascular reactivity via regulation of CAMK2 activity in addition to regulation of left ventricular mass. Mediates the NLRP3 inflammasome in cardiomyocytes via acting as an inhibitor of the MAPK14/p38 and MAPK8/JNK pathways, thereby regulating ventricular remodeling and cardiac rhythm post-myocardial infarction. Negatively effects insulin sensitivity and promotes lipid formation in adipose tissues independent of CAMK2 signaling. In Mus musculus (Mouse), this protein is Calcium/calmodulin-dependent protein kinase II inhibitor 1 (Camk2n1).